The chain runs to 460 residues: Nucleosome assembly protein 1-like 2 (460 aa).

Basic and acidic residues predominate over residues 1 to 11 (MAESVDHKELS). 2 disordered regions span residues 1–87 (MAES…DSDR) and 213–238 (DEEEEEEEDDSAGATGGEEVNEEDPK). Residues 213–223 (DEEEEEEEDDS) show a composition bias toward acidic residues. The Nuclear localization signal motif lies at 346–352 (IKKKQRH).

Belongs to the nucleosome assembly protein (NAP) family. Brain, specifically expressed in neurons.

It localises to the nucleus. Its function is as follows. Acidic protein which may be involved in interactions with other proteins or DNA. The polypeptide is Nucleosome assembly protein 1-like 2 (Nap1l2) (Mus musculus (Mouse)).